Here is a 212-residue protein sequence, read N- to C-terminus: NAD(P)H-hydrate epimerase (212 aa).

The region spanning 11 to 212 (MRHYDSYTIN…ANDMGTYAVD (202 aa)) is the YjeF N-terminal domain. 60–64 (NNGGD) lines the (6S)-NADPHX pocket. K(+) contacts are provided by Asn61 and Asp123. (6S)-NADPHX is bound by residues 127–133 (GIGIDRA), Tyr138, and Asp156. Ser159 is a binding site for K(+).

Belongs to the NnrE/AIBP family. Requires K(+) as cofactor.

It catalyses the reaction (6R)-NADHX = (6S)-NADHX. The catalysed reaction is (6R)-NADPHX = (6S)-NADPHX. Catalyzes the epimerization of the S- and R-forms of NAD(P)HX, a damaged form of NAD(P)H that is a result of enzymatic or heat-dependent hydration. This is a prerequisite for the S-specific NAD(P)H-hydrate dehydratase to allow the repair of both epimers of NAD(P)HX. This chain is NAD(P)H-hydrate epimerase, found in Limosilactobacillus reuteri (strain ATCC 55730 / SD2112) (Lactobacillus reuteri).